The chain runs to 225 residues: Large ribosomal subunit protein mL58 (225 aa).

Residues 106–138 are disordered; that stretch reads PQAPITTPESSSTDAAAADQHGDLPPVLYNPTK. Residues 109-119 show a composition bias toward polar residues; that stretch reads PITTPESSSTD.

The protein belongs to the mitochondrion-specific ribosomal protein mL58 family. As to quaternary structure, component of the mitochondrial large ribosomal subunit (mt-LSU). Mature N.crassa 74S mitochondrial ribosomes consist of a small (37S) and a large (54S) subunit. The 37S small subunit contains a 16S ribosomal RNA (16S mt-rRNA) and 32 different proteins. The 54S large subunit contains a 23S rRNA (23S mt-rRNA) and 42 different proteins.

It localises to the mitochondrion. Its function is as follows. Component of the mitochondrial ribosome (mitoribosome), a dedicated translation machinery responsible for the synthesis of mitochondrial genome-encoded proteins, including at least some of the essential transmembrane subunits of the mitochondrial respiratory chain. The mitoribosomes are attached to the mitochondrial inner membrane and translation products are cotranslationally integrated into the membrane. The chain is Large ribosomal subunit protein mL58 (mrpl20) from Neurospora crassa (strain ATCC 24698 / 74-OR23-1A / CBS 708.71 / DSM 1257 / FGSC 987).